A 511-amino-acid chain; its full sequence is Anthranilate synthase component 1 (511 aa).

A disordered region spans residues 1–36 (MTTHAAEAPTTDPQGAPGSQKTPDATEAEEAARATV). A compositionally biased stretch (polar residues) spans 11 to 23 (TDPQGAPGSQKTP). Residues Ser-84 and 292-294 (PYM) each bind L-tryptophan. 328 to 329 (GT) is a chorismate binding site. Glu-355 is a binding site for Mg(2+). Residues Tyr-443, Arg-463, 477–479 (GAG), and Gly-479 contribute to the chorismate site. Glu-492 provides a ligand contact to Mg(2+).

This sequence belongs to the anthranilate synthase component I family. In terms of assembly, heterotetramer consisting of two non-identical subunits: a beta subunit (TrpG) and a large alpha subunit (TrpE). Requires Mg(2+) as cofactor.

The enzyme catalyses chorismate + L-glutamine = anthranilate + pyruvate + L-glutamate + H(+). The protein operates within amino-acid biosynthesis; L-tryptophan biosynthesis; L-tryptophan from chorismate: step 1/5. Its activity is regulated as follows. Feedback inhibited by tryptophan. Its function is as follows. Part of a heterotetrameric complex that catalyzes the two-step biosynthesis of anthranilate, an intermediate in the biosynthesis of L-tryptophan. In the first step, the glutamine-binding beta subunit (TrpG) of anthranilate synthase (AS) provides the glutamine amidotransferase activity which generates ammonia as a substrate that, along with chorismate, is used in the second step, catalyzed by the large alpha subunit of AS (TrpE) to produce anthranilate. In the absence of TrpG, TrpE can synthesize anthranilate directly from chorismate and high concentrations of ammonia. This Streptomyces coelicolor (strain ATCC BAA-471 / A3(2) / M145) protein is Anthranilate synthase component 1 (trpE).